Consider the following 461-residue polypeptide: Fumarate hydratase class II (461 aa).

Substrate contacts are provided by residues 97–99 (SGT), 127–130 (HPND), 137–139 (SSN), and T185. The active-site Proton donor/acceptor is the H186. The active site involves S316. Residues S317 and 322–324 (KVN) each bind substrate.

This sequence belongs to the class-II fumarase/aspartase family. Fumarase subfamily. In terms of assembly, homotetramer.

The protein localises to the cytoplasm. It carries out the reaction (S)-malate = fumarate + H2O. It participates in carbohydrate metabolism; tricarboxylic acid cycle; (S)-malate from fumarate: step 1/1. In terms of biological role, involved in the TCA cycle. Catalyzes the stereospecific interconversion of fumarate to L-malate. This is Fumarate hydratase class II from Staphylococcus aureus (strain MRSA252).